The chain runs to 573 residues: Glutamate--tRNA ligase (573 aa).

A 'HIGH' region motif is present at residues 106 to 116 (PNPDGAFHLGN).

It belongs to the class-I aminoacyl-tRNA synthetase family. Glutamate--tRNA ligase type 2 subfamily.

The protein resides in the cytoplasm. The enzyme catalyses tRNA(Glu) + L-glutamate + ATP = L-glutamyl-tRNA(Glu) + AMP + diphosphate. In terms of biological role, catalyzes the attachment of glutamate to tRNA(Glu) in a two-step reaction: glutamate is first activated by ATP to form Glu-AMP and then transferred to the acceptor end of tRNA(Glu). The protein is Glutamate--tRNA ligase of Thermococcus onnurineus (strain NA1).